A 438-amino-acid polypeptide reads, in one-letter code: ATP-dependent RNA helicase SUB2 (438 aa).

Acidic residues predominate over residues 1–16 (MSHEEDLIDYSDEEIQ). The interval 1-41 (MSHEEDLIDYSDEEIQPTEVPANGDAAAAKGGLAAPDASGE) is disordered. Positions 21–38 (PANGDAAAAKGGLAAPDA) are enriched in low complexity. The Q motif motif lies at 52–80 (TGFRDFLLKDELVRAITDCGFEHPSEVQQ). The region spanning 83 to 260 (IPQAILGNDV…KKFMQNPLEI (178 aa)) is the Helicase ATP-binding domain. Residue 96–103 (AKSGLGKT) coordinates ATP. A DEAD box motif is present at residues 207–210 (DECD). In terms of domain architecture, Helicase C-terminal spans 288-433 (KLNDLLDNLE…EFPEDGISSA (146 aa)).

This sequence belongs to the DEAD box helicase family. DECD subfamily.

It is found in the nucleus. The enzyme catalyses ATP + H2O = ADP + phosphate + H(+). Functionally, ATP-binding RNA helicase involved in transcription elongation and required for the export of mRNA out of the nucleus. SUB2 also plays a role in pre-mRNA splicing and spliceosome assembly. May be involved in rDNA and telomeric silencing, and maintenance of genome integrity. The polypeptide is ATP-dependent RNA helicase SUB2 (SUB2) (Phaeosphaeria nodorum (strain SN15 / ATCC MYA-4574 / FGSC 10173) (Glume blotch fungus)).